The sequence spans 152 residues: 1,4-dihydroxy-2-naphthoyl-CoA hydrolase (152 aa).

Residue Asp-20 is part of the active site.

It belongs to the 4-hydroxybenzoyl-CoA thioesterase family. DHNA-CoA hydrolase subfamily.

The enzyme catalyses 1,4-dihydroxy-2-naphthoyl-CoA + H2O = 1,4-dihydroxy-2-naphthoate + CoA + H(+). It functions in the pathway cofactor biosynthesis; phylloquinone biosynthesis. The protein operates within quinol/quinone metabolism; 1,4-dihydroxy-2-naphthoate biosynthesis; 1,4-dihydroxy-2-naphthoate from chorismate: step 7/7. Its function is as follows. Catalyzes the hydrolysis of 1,4-dihydroxy-2-naphthoyl-CoA (DHNA-CoA) to 1,4-dihydroxy-2-naphthoate (DHNA), a reaction involved in phylloquinone (vitamin K1) biosynthesis. The chain is 1,4-dihydroxy-2-naphthoyl-CoA hydrolase from Parasynechococcus marenigrum (strain WH8102).